The primary structure comprises 334 residues: L-lactate dehydrogenase B chain (334 aa).

N-acetylalanine is present on A2. K7 carries the post-translational modification N6-acetyllysine. A Phosphoserine modification is found at S44. NAD(+)-binding positions include 53 to 58 (DVLEDK) and R100. K58 is modified (N6-acetyllysine). R107 is a binding site for substrate. K119 bears the N6-acetyllysine mark. N139 is a binding site for NAD(+). Substrate-binding residues include N139 and R170. H194 (proton acceptor) is an active-site residue. Residue Y240 is modified to Phosphotyrosine. T249 serves as a coordination point for substrate. Position 329 is an N6-acetyllysine (K329).

It belongs to the LDH/MDH superfamily. LDH family. Homotetramer. Interacts with PTEN upstream reading frame protein MP31; the interaction leads to inhibition of mitochondrial lactate dehydrogenase activity, preventing conversion of lactate to pyruvate in mitochondria.

The protein resides in the cytoplasm. Its subcellular location is the mitochondrion inner membrane. It catalyses the reaction (S)-lactate + NAD(+) = pyruvate + NADH + H(+). It participates in fermentation; pyruvate fermentation to lactate; (S)-lactate from pyruvate: step 1/1. In terms of biological role, interconverts simultaneously and stereospecifically pyruvate and lactate with concomitant interconversion of NADH and NAD(+). This Bos taurus (Bovine) protein is L-lactate dehydrogenase B chain (LDHB).